Here is a 752-residue protein sequence, read N- to C-terminus: F-box and WD repeat domain containing protein 10B (752 aa).

WD repeat units follow at residues 169-206 (GLNQ…TSLP), 451-490 (GHAG…CTRI), 493-532 (GHQG…KTFR), 534-569 (KDPI…LVKT), 572-609 (GHEG…ERCL), and 611-652 (AFKH…KVIK).

In terms of tissue distribution, expressed in pancreas, heart and skeletal muscle.

This Homo sapiens (Human) protein is F-box and WD repeat domain containing protein 10B.